The chain runs to 287 residues: Acetylglutamate kinase (287 aa).

Substrate contacts are provided by residues 65-66, Arg87, and Asn181; that span reads GG.

This sequence belongs to the acetylglutamate kinase family. ArgB subfamily.

It is found in the cytoplasm. It catalyses the reaction N-acetyl-L-glutamate + ATP = N-acetyl-L-glutamyl 5-phosphate + ADP. Its pathway is amino-acid biosynthesis; L-arginine biosynthesis; N(2)-acetyl-L-ornithine from L-glutamate: step 2/4. Catalyzes the ATP-dependent phosphorylation of N-acetyl-L-glutamate. The chain is Acetylglutamate kinase from Syntrophomonas wolfei subsp. wolfei (strain DSM 2245B / Goettingen).